The sequence spans 262 residues: tRNA (guanine-N(1)-)-methyltransferase (262 aa).

S-adenosyl-L-methionine-binding positions include G113 and 137–142; that span reads IGDYVL.

It belongs to the RNA methyltransferase TrmD family. In terms of assembly, homodimer.

It is found in the cytoplasm. It catalyses the reaction guanosine(37) in tRNA + S-adenosyl-L-methionine = N(1)-methylguanosine(37) in tRNA + S-adenosyl-L-homocysteine + H(+). In terms of biological role, specifically methylates guanosine-37 in various tRNAs. This chain is tRNA (guanine-N(1)-)-methyltransferase, found in Thermobifida fusca (strain YX).